The chain runs to 408 residues: Argininosuccinate synthase (408 aa).

Residues 8-16 and Ala-35 each bind ATP; that span reads AYSGGLDTT. The L-citrulline site is built by Tyr-86 and Ser-91. Gly-116 lines the ATP pocket. Residues Thr-118, Asn-122, and Asp-123 each contribute to the L-aspartate site. Asn-122 is a binding site for L-citrulline. L-citrulline contacts are provided by Arg-126, Ser-177, Ser-186, Glu-263, and Tyr-275.

It belongs to the argininosuccinate synthase family. Type 1 subfamily. Homotetramer.

Its subcellular location is the cytoplasm. The enzyme catalyses L-citrulline + L-aspartate + ATP = 2-(N(omega)-L-arginino)succinate + AMP + diphosphate + H(+). It functions in the pathway amino-acid biosynthesis; L-arginine biosynthesis; L-arginine from L-ornithine and carbamoyl phosphate: step 2/3. This is Argininosuccinate synthase from Lachnospira eligens (strain ATCC 27750 / DSM 3376 / VPI C15-48 / C15-B4) (Eubacterium eligens).